The following is a 719-amino-acid chain: Polyribonucleotide nucleotidyltransferase (719 aa).

Mg(2+)-binding residues include Asp-491 and Asp-497. In terms of domain architecture, KH spans 558-617 (PRMLTIKINPEKIRDVIGKGGATIRALTEETGTQIDISDDGTIVIASVDETQAKEAQRRI). The 69-residue stretch at 627 to 695 (GQIYDGSVLR…DKGRLRLSIK (69 aa)) folds into the S1 motif domain.

This sequence belongs to the polyribonucleotide nucleotidyltransferase family. The cofactor is Mg(2+).

The protein localises to the cytoplasm. The catalysed reaction is RNA(n+1) + phosphate = RNA(n) + a ribonucleoside 5'-diphosphate. Involved in mRNA degradation. Catalyzes the phosphorolysis of single-stranded polyribonucleotides processively in the 3'- to 5'-direction. This is Polyribonucleotide nucleotidyltransferase from Bordetella bronchiseptica (strain ATCC BAA-588 / NCTC 13252 / RB50) (Alcaligenes bronchisepticus).